The sequence spans 193 residues: Imidazoleglycerol-phosphate dehydratase (193 aa).

This sequence belongs to the imidazoleglycerol-phosphate dehydratase family.

It is found in the cytoplasm. The enzyme catalyses D-erythro-1-(imidazol-4-yl)glycerol 3-phosphate = 3-(imidazol-4-yl)-2-oxopropyl phosphate + H2O. It functions in the pathway amino-acid biosynthesis; L-histidine biosynthesis; L-histidine from 5-phospho-alpha-D-ribose 1-diphosphate: step 6/9. The chain is Imidazoleglycerol-phosphate dehydratase from Sulfolobus acidocaldarius (strain ATCC 33909 / DSM 639 / JCM 8929 / NBRC 15157 / NCIMB 11770).